The primary structure comprises 377 residues: Nitric oxide reductase FlRd-NAD(+) reductase (377 aa).

Belongs to the FAD-dependent oxidoreductase family. FAD serves as cofactor.

It is found in the cytoplasm. It catalyses the reaction 2 reduced [nitric oxide reductase rubredoxin domain] + NAD(+) + H(+) = 2 oxidized [nitric oxide reductase rubredoxin domain] + NADH. The protein operates within nitrogen metabolism; nitric oxide reduction. One of at least two accessory proteins for anaerobic nitric oxide (NO) reductase. Reduces the rubredoxin moiety of NO reductase. The protein is Nitric oxide reductase FlRd-NAD(+) reductase of Klebsiella pneumoniae subsp. pneumoniae (strain ATCC 700721 / MGH 78578).